The sequence spans 232 residues: Sugar fermentation stimulation protein homolog (232 aa).

This sequence belongs to the SfsA family.

In Moorella thermoacetica (strain ATCC 39073 / JCM 9320), this protein is Sugar fermentation stimulation protein homolog.